A 343-amino-acid chain; its full sequence is Acetylglutamate kinase (343 aa).

Residues G98 to G99, R120, and N219 contribute to the substrate site.

This sequence belongs to the acetylglutamate kinase family. ArgB subfamily.

The protein localises to the cytoplasm. The catalysed reaction is N-acetyl-L-glutamate + ATP = N-acetyl-L-glutamyl 5-phosphate + ADP. Its pathway is amino-acid biosynthesis; L-arginine biosynthesis; N(2)-acetyl-L-ornithine from L-glutamate: step 2/4. Catalyzes the ATP-dependent phosphorylation of N-acetyl-L-glutamate. The chain is Acetylglutamate kinase from Frankia alni (strain DSM 45986 / CECT 9034 / ACN14a).